Consider the following 124-residue polypeptide: Aspartate 1-decarboxylase (124 aa).

The active-site Schiff-base intermediate with substrate; via pyruvic acid is Ser25. A Pyruvic acid (Ser) modification is found at Ser25. Thr57 lines the substrate pocket. The active-site Proton donor is the Tyr58. 73–75 (GAA) contributes to the substrate binding site.

It belongs to the PanD family. In terms of assembly, heterooctamer of four alpha and four beta subunits. Pyruvate serves as cofactor. In terms of processing, is synthesized initially as an inactive proenzyme, which is activated by self-cleavage at a specific serine bond to produce a beta-subunit with a hydroxyl group at its C-terminus and an alpha-subunit with a pyruvoyl group at its N-terminus.

The protein localises to the cytoplasm. The enzyme catalyses L-aspartate + H(+) = beta-alanine + CO2. The protein operates within cofactor biosynthesis; (R)-pantothenate biosynthesis; beta-alanine from L-aspartate: step 1/1. Its function is as follows. Catalyzes the pyruvoyl-dependent decarboxylation of aspartate to produce beta-alanine. This is Aspartate 1-decarboxylase from Clostridium botulinum (strain Alaska E43 / Type E3).